The sequence spans 293 residues: Cell division protein FtsQ (293 aa).

Over 1-27 (MRPLMRNRASERGVDPAPSRWAWRMQR) the chain is Cytoplasmic. A helical transmembrane segment spans residues 28–48 (LLLTPAFLLFLRAGVPVLVLF). Over 49–293 (GAATWWLSDT…WWEIRQVSRQ (245 aa)) the chain is Periplasmic. The POTRA domain maps to 81-149 (FMVQLMAVDG…GVLHIDVEPR (69 aa)).

This sequence belongs to the FtsQ/DivIB family. FtsQ subfamily.

The protein resides in the cell inner membrane. Its function is as follows. Essential cell division protein. The sequence is that of Cell division protein FtsQ from Roseobacter litoralis (strain ATCC 49566 / DSM 6996 / JCM 21268 / NBRC 15278 / OCh 149).